A 555-amino-acid chain; its full sequence is Bifunctional epoxide hydrolase 2 (555 aa).

The tract at residues 1–224 is phosphatase; the sequence is MALRAAVFDL…KVTGVQLLQT (224 aa). 2 residues coordinate Mg(2+): Asp-9 and Asp-11. An N6-acetyllysine modification is found at Lys-43. 123 to 124 lines the phosphate pocket; sequence TN. Asp-185 serves as a coordination point for Mg(2+). N6-acetyllysine is present on residues Lys-191 and Lys-215. The segment at 235–555 is epoxide hydrolase; sequence SALSHGYVLI…ARNPLVDSKL (321 aa). The AB hydrolase-1 domain occupies 259 to 531; the sequence is PAVCLCHGFP…CGHWTQIDKP (273 aa). Asp-335 functions as the Nucleophile in the catalytic mechanism. Ser-370 is subject to Phosphoserine. Tyr-383 is a binding site for substrate. An N6-succinyllysine modification is found at Lys-455. Tyr-466 (proton donor) is an active-site residue. Lys-505 bears the N6-succinyllysine mark. Cys-522 carries the S-(15-deoxy-Delta12,14-prostaglandin J2-9-yl)cysteine lipid modification. Residue His-524 is the Proton acceptor of the active site. The Microbody targeting signal motif lies at 553-555; the sequence is SKL. At Lys-554 the chain carries N6-succinyllysine.

Belongs to the AB hydrolase superfamily. Epoxide hydrolase family. As to quaternary structure, homodimer. Mg(2+) is required as a cofactor. In terms of processing, the covalent modification of cysteine by 15-deoxy-Delta12,14-prostaglandin-J2 is autocatalytic and reversible. It may occur as an alternative to other cysteine modifications, such as S-nitrosylation and S-palmitoylation.

Its subcellular location is the cytoplasm. The protein resides in the peroxisome. The enzyme catalyses an epoxide + H2O = an ethanediol. It catalyses the reaction (9S,10S)-10-hydroxy-9-(phosphooxy)octadecanoate + H2O = (9S,10S)-9,10-dihydroxyoctadecanoate + phosphate. It carries out the reaction (14R,15S)-epoxy-(5Z,8Z,11Z)-eicosatrienoate + H2O = (14R,15R)-dihydroxy-(5Z,8Z,11Z)-eicosatrienoate. Its activity is regulated as follows. Inhibited by 1-(1-acetylpiperidin-4-yl)-3-(4-(trifl uoromethoxy)phenyl)urea (TPAU), 1-cyclohexyl-3-dodecylurea (CDU), 12-(3-adamantan-1-yl-ureido)-dodecanoic acid (AUDA), 1-((3S, 5S, 7S)-adamantan-1-yl)-3-(5-(2-(2-ethoxyethoxy) ethoxy)pentyl)urea (AEPU), N-adamantyl-N[']-cyclohexyl urea (ACU), 4-(((1S, 4S)-4-(3-((3S, 5S, 7S)-adamantan-1-yl) ureido)cyclohexyl)oxy)benzoic acid (c-AUCB), 4-(((1R, 4R)-4-(3-((3S, 5S, 7S)-adamantan-1-yl)ureido)cyclohexyl)oxy)benzoic acid (t-AUCB), 4-(((1R, 4R)-4-(3-(4(trifluoromethoxy)phenyl)ureido)cyclohexyl)oxy)benzoic acid (t-TAUCB) and to a lesser extent by 8-(3-((3S, 5S, 7S)-adamantan-1-yl)ureido) octanoic acid (AUOA). Its function is as follows. Bifunctional enzyme. The C-terminal domain has epoxide hydrolase activity and acts on epoxides (alkene oxides, oxiranes) and arene oxides. Plays a role in xenobiotic metabolism by degrading potentially toxic epoxides. Also determines steady-state levels of physiological mediators. The N-terminal domain has lipid phosphatase activity, with the highest activity towards threo-9,10-phosphonooxy-hydroxy-octadecanoic acid, followed by erythro-9,10-phosphonooxy-hydroxy-octadecanoic acid, 12-phosphonooxy-octadec-9Z-enoic acid and 12-phosphonooxy-octadec-9E-enoic acid. The protein is Bifunctional epoxide hydrolase 2 (EPHX2) of Sus scrofa (Pig).